The primary structure comprises 86 residues: MIOREX complex component 7 (86 aa).

Associates with the mitochondrial ribosome.

The protein localises to the mitochondrion. Functionally, component of MIOREX complexes, large expressome-like assemblies of ribosomes with factors involved in all the steps of post-transcriptional gene expression. The protein is MIOREX complex component 7 of Saccharomyces cerevisiae (strain ATCC 204508 / S288c) (Baker's yeast).